The following is a 275-amino-acid chain: Transmembrane protein 202 (275 aa).

4 consecutive transmembrane segments (helical) span residues 60–80 (SGFS…QFLV), 116–136 (ALFL…LSSC), 151–171 (VSML…LFLA), and 193–213 (WCSE…FITF).

The protein resides in the membrane. This Mus musculus (Mouse) protein is Transmembrane protein 202 (Tmem202).